Here is a 262-residue protein sequence, read N- to C-terminus: 2-keto-4-pentenoate hydratase 2 (262 aa).

This sequence belongs to the hydratase/decarboxylase family. MhpD subfamily. It depends on a divalent metal cation as a cofactor.

It carries out the reaction (S)-4-hydroxy-2-oxopentanoate = (2Z)-2-hydroxypenta-2,4-dienoate + H2O. It functions in the pathway aromatic compound metabolism; 3-phenylpropanoate degradation. Functionally, catalyzes the conversion of 2-hydroxypentadienoic acid (enolic form of 2-oxopent-4-enoate) to 4-hydroxy-2-ketopentanoic acid. This chain is 2-keto-4-pentenoate hydratase 2, found in Dechloromonas aromatica (strain RCB).